Here is a 379-residue protein sequence, read N- to C-terminus: MGYARKVGWVTAGLVIGAGACYCIYRLTRGRKQNKEKMAEGGSGDVDDAGDCSGARYNDWSDDDDDSNESKSIVWYPPWARIGTEAGTRARARARARATRARRAVQKRASPNSDDTILSPQELQKVLCLVEMSEKPYILEAALIALGNNAAYAFNRDIIRDLGGLPIVAKILNTRDPIVKEKALIVLNNLSVNAENQRRLKVYMNQVCDDTITSRLNSSVQLAGLRLLTNMTVTNEYQHMLANSISDFFRLFSAGNEETKLQVLKLLLNLAENPAMTRELLRAQVPSSLGSLFNKKENKEVILKLLVIFENINDNFKWEENEPTQNQFGEGSLFFFLKEFQVCADKVLGIESHHDFLVKVKVGKFMAKLAEHMFPKSQE.

Topologically, residues methionine 1–lysine 6 are mitochondrial intermembrane. Mitochondrion outer membrane (MOM)-targeting sequence regions lie at residues methionine 1–lysine 6 and arginine 26–lysine 37. Residues valine 7–arginine 29 form a helical; Signal-anchor membrane-spanning segment. Residues glycine 30–glutamate 379 are Cytoplasmic-facing. Residues serine 61, serine 67, and serine 72 each carry the phosphoserine modification. Residues arginine 89–alanine 98 form a nuclear localization signal region. Serine 110 carries the phosphoserine modification. ARM repeat units lie at residues proline 111–alanine 151, alanine 153–valine 192, and valine 233–glutamate 272.

The protein belongs to the eutherian X-chromosome-specific Armcx family. In terms of assembly, interacts (via ARM domain) with MIRO1, MIRO2 and TRAK2. The interaction with Miro is calcium-dependent. Interacts with SOX10.

It localises to the mitochondrion outer membrane. The protein localises to the cytoplasm. The protein resides in the nucleus. Its function is as follows. Regulates mitochondrial aggregation and transport in axons in living neurons. May link mitochondria to the TRAK2-kinesin motor complex via its interaction with Miro and TRAK2. Mitochondrial distribution and dynamics is regulated through ARMCX3 protein degradation, which is promoted by PCK and negatively regulated by WNT1. Enhances the SOX10-mediated transactivation of the neuronal acetylcholine receptor subunit alpha-3 and beta-4 subunit gene promoters. This is Armadillo repeat-containing X-linked protein 3 (ARMCX3) from Pongo abelii (Sumatran orangutan).